A 1069-amino-acid polypeptide reads, in one-letter code: Kinesin-like protein vab-8 (1069 aa).

One can recognise a Kinesin motor domain in the interval 15 to 325 (PLRTIPKLRL…ACKIARTRVK (311 aa)). 3 disordered regions span residues 328–374 (MGHG…LESG), 391–436 (SRTT…KSSP), and 572–598 (EQEEESMRTSTATTGGSKKDHPLRILS). Interaction with unc-51 stretches follow at residues 331–517 (GRKP…KSKY) and 517–719 (YNLD…TVVD). Low complexity-rich tracts occupy residues 339-364 (SSGTMDSNGSSSSFGTTTITPGGTPR) and 391-407 (SRTTSPASTTMPSTPTS). An interaction with unc-73 region spans residues 403-877 (STPTSIRPLH…SAERDRKTSK (475 aa)). Residues 719–769 (DWSQIERKKEREKDAMEEEKRKEVLRERRAKLKITELEIKRERNMIDKELD) adopt a coiled-coil conformation. The disordered stretch occupies residues 786-960 (SLSPCRGGRT…RQSYSASSGY (175 aa)). The segment covering 824-847 (GGSLAKLSASGASGSGPPSSPSLG) has biased composition (low complexity). Residues 883-897 (SSKERRSSGSKEELQ) show a composition bias toward basic and acidic residues. The segment covering 906 to 928 (TSPKTYGGPGTSSSGRGSSAPGS) has biased composition (low complexity). Positions 938-960 (TEKTANGTMPRSKRQSYSASSGY) are enriched in polar residues. Positions 990 to 1027 (LVRQADEIRHRQWQLKKELEEAKRAIGQEEDAKMIANS) form a coiled coil.

The protein belongs to the TRAFAC class myosin-kinesin ATPase superfamily. Kinesin family. KIF26 subfamily. Interacts with unc-51 and unc-73. In terms of processing, phosphorylated by unc-51.

It localises to the cytoplasm. The protein localises to the cytoskeleton. Its function is as follows. Required for posterior migration of cells and axon growth cones during nervous system assembly. In PLM neuron, regulates innexin unc-9 gap junction turnover by suppressing unc-9 transport out of the gap junctions. The sequence is that of Kinesin-like protein vab-8 (vab-8) from Caenorhabditis briggsae.